The sequence spans 146 residues: D-aminoacyl-tRNA deacylase (146 aa).

Positions 137 to 138 (GP) match the Gly-cisPro motif, important for rejection of L-amino acids motif.

This sequence belongs to the DTD family. As to quaternary structure, homodimer.

Its subcellular location is the cytoplasm. It carries out the reaction glycyl-tRNA(Ala) + H2O = tRNA(Ala) + glycine + H(+). It catalyses the reaction a D-aminoacyl-tRNA + H2O = a tRNA + a D-alpha-amino acid + H(+). In terms of biological role, an aminoacyl-tRNA editing enzyme that deacylates mischarged D-aminoacyl-tRNAs. Also deacylates mischarged glycyl-tRNA(Ala), protecting cells against glycine mischarging by AlaRS. Acts via tRNA-based rather than protein-based catalysis; rejects L-amino acids rather than detecting D-amino acids in the active site. By recycling D-aminoacyl-tRNA to D-amino acids and free tRNA molecules, this enzyme counteracts the toxicity associated with the formation of D-aminoacyl-tRNA entities in vivo and helps enforce protein L-homochirality. This Acinetobacter baylyi (strain ATCC 33305 / BD413 / ADP1) protein is D-aminoacyl-tRNA deacylase.